Reading from the N-terminus, the 63-residue chain is Large ribosomal subunit protein uL29 (63 aa).

It belongs to the universal ribosomal protein uL29 family.

This chain is Large ribosomal subunit protein uL29, found in Vibrio vulnificus (strain CMCP6).